The chain runs to 2207 residues: Desmoplakin-B (2207 aa).

Coiled coils occupy residues Met-506–Lys-916, Ala-952–Arg-1000, and Thr-1029–Asn-1063. A compositionally biased stretch (basic and acidic residues) spans Lys-905–Leu-924. Positions Lys-905–Glu-933 are disordered. Plectin repeat units follow at residues Leu-1369 to Gln-1406, Leu-1407 to Leu-1445, Leu-1446 to Leu-1483, Tyr-1571 to Leu-1609, Leu-1610 to Leu-1647, Leu-1685 to Leu-1723, Ile-1783 to Leu-1811, Leu-1992 to Arg-2029, and Phe-2068 to Leu-2106. Positions Ile-2155–Pro-2164 are enriched in polar residues. Positions Ile-2155–Ser-2207 are disordered. The span at Gly-2165–Ser-2207 shows a compositional bias: low complexity.

This sequence belongs to the plakin or cytolinker family.

The protein localises to the cell junction. Its subcellular location is the desmosome. It localises to the cell membrane. Functionally, involved in the organization of desmosome cell-cell junctions. Of particular importance in cell adhesion in the skin and during cardiac development. May also play a role in the regulation of Wnt, TGF-beta and Hippo signaling pathways. In Danio rerio (Zebrafish), this protein is Desmoplakin-B.